The sequence spans 300 residues: uncharacterized protein (300 aa).

Disordered stretches follow at residues 167 to 186 (DVFL…HHEH) and 224 to 244 (ADGS…DASH). The span at 224–236 (ADGSSLETSSMSS) shows a compositional bias: polar residues.

This is an uncharacterized protein from Rattus norvegicus (Rat).